A 460-amino-acid polypeptide reads, in one-letter code: Nitrogenase iron-iron protein beta chain (460 aa).

Residues Cys20, Cys45, Cys104, and Ser143 each contribute to the [8Fe-7S] cluster site.

It belongs to the NifD/NifK/NifE/NifN family. In terms of assembly, hexamer of two alpha, two beta, and two delta chains. [8Fe-7S] cluster serves as cofactor.

The enzyme catalyses N2 + 8 reduced [2Fe-2S]-[ferredoxin] + 16 ATP + 16 H2O = H2 + 8 oxidized [2Fe-2S]-[ferredoxin] + 2 NH4(+) + 16 ADP + 16 phosphate + 6 H(+). Its function is as follows. This iron-iron protein is part of the nitrogenase complex that catalyzes the key enzymatic reactions in nitrogen fixation. Other nitrogenase complexes utilize a molybdenum-iron protein or a vanadium-iron protein. The protein is Nitrogenase iron-iron protein beta chain (anfK) of Rhodobacter capsulatus (Rhodopseudomonas capsulata).